Consider the following 543-residue polypeptide: Cytochrome P450 1B1 (543 aa).

C470 lines the heme pocket.

It belongs to the cytochrome P450 family. Heme serves as cofactor. Constitutively expressed in retinal and kidney pericytes cells. Expressed in retinal endothelial cells (at protein level). Expressed in cardiac, pulmonary and aortic endothelial cells. Constitutively expressed in trabecular meshwork of the eye (at protein level).

The protein resides in the endoplasmic reticulum membrane. It localises to the microsome membrane. The protein localises to the mitochondrion. It catalyses the reaction an organic molecule + reduced [NADPH--hemoprotein reductase] + O2 = an alcohol + oxidized [NADPH--hemoprotein reductase] + H2O + H(+). The catalysed reaction is 17beta-estradiol + reduced [NADPH--hemoprotein reductase] + O2 = 2-hydroxy-17beta-estradiol + oxidized [NADPH--hemoprotein reductase] + H2O + H(+). The enzyme catalyses 17beta-estradiol + reduced [NADPH--hemoprotein reductase] + O2 = 4-hydroxy-17beta-estradiol + oxidized [NADPH--hemoprotein reductase] + H2O + H(+). It carries out the reaction estrone + reduced [NADPH--hemoprotein reductase] + O2 = 2-hydroxyestrone + oxidized [NADPH--hemoprotein reductase] + H2O + H(+). It catalyses the reaction estrone + reduced [NADPH--hemoprotein reductase] + O2 = 4-hydroxyestrone + oxidized [NADPH--hemoprotein reductase] + H2O + H(+). The catalysed reaction is testosterone + reduced [NADPH--hemoprotein reductase] + O2 = 6beta,17beta-dihydroxyandrost-4-en-3-one + oxidized [NADPH--hemoprotein reductase] + H2O + H(+). The enzyme catalyses progesterone + reduced [NADPH--hemoprotein reductase] + O2 = 6beta-hydroxyprogesterone + oxidized [NADPH--hemoprotein reductase] + H2O + H(+). It carries out the reaction progesterone + reduced [NADPH--hemoprotein reductase] + O2 = 16alpha-hydroxyprogesterone + oxidized [NADPH--hemoprotein reductase] + H2O + H(+). It catalyses the reaction all-trans-retinol + reduced [NADPH--hemoprotein reductase] + O2 = all-trans-retinal + oxidized [NADPH--hemoprotein reductase] + 2 H2O + H(+). The catalysed reaction is all-trans-retinal + reduced [NADPH--hemoprotein reductase] + O2 = all-trans-retinoate + oxidized [NADPH--hemoprotein reductase] + H2O + 2 H(+). The enzyme catalyses (5Z,8Z,11Z,14Z)-eicosatetraenoate + reduced [NADPH--hemoprotein reductase] + O2 = (8R,9S)-epoxy-(5Z,11Z,14Z)-eicosatrienoate + oxidized [NADPH--hemoprotein reductase] + H2O + H(+). It carries out the reaction (5Z,8Z,11Z,14Z)-eicosatetraenoate + reduced [NADPH--hemoprotein reductase] + O2 = (11R,12S)-epoxy-(5Z,8Z,14Z)-eicosatrienoate + oxidized [NADPH--hemoprotein reductase] + H2O + H(+). It catalyses the reaction (5Z,8Z,11Z,14Z)-eicosatetraenoate + reduced [NADPH--hemoprotein reductase] + O2 = (11S,12R)-epoxy-(5Z,8Z,14Z)-eicosatrienoate + oxidized [NADPH--hemoprotein reductase] + H2O + H(+). The catalysed reaction is (5Z,8Z,11Z,14Z)-eicosatetraenoate + reduced [NADPH--hemoprotein reductase] + O2 = (14R,15S)-epoxy-(5Z,8Z,11Z)-eicosatrienoate + oxidized [NADPH--hemoprotein reductase] + H2O + H(+). The enzyme catalyses (5S)-hydroperoxy-(6E,8Z,11Z,14Z)-eicosatetraenoate = 5-oxo-(6E,8Z,11Z,14Z)-eicosatetraenoate + H2O. It carries out the reaction (12S)-hydroperoxy-(5Z,8Z,10E,14Z)-eicosatetraenoate = 12-oxo-(5Z,8Z,10E,14Z)-eicosatetraenoate + H2O. It catalyses the reaction (13S)-hydroperoxy-(9Z,11E)-octadecadienoate = 13-oxo-(9Z,11E)-octadecadienoate + H2O. The catalysed reaction is (15S)-hydroperoxy-(5Z,8Z,11Z,13E)-eicosatetraenoate = 15-oxo-(5Z,8Z,11Z,13E)-eicosatetraenoate + H2O. It functions in the pathway steroid hormone biosynthesis. Its pathway is cofactor metabolism; retinol metabolism. It participates in lipid metabolism; arachidonate metabolism. Its activity is regulated as follows. Enzyme activity is increased by cytochrome b5. Enzyme activity is increased by liposomes containing anionic phospholipids, phosphatidic acid and cardiolipin. Inhibited by naringenin with an IC(50) of 5 uM. Its function is as follows. A cytochrome P450 monooxygenase involved in the metabolism of various endogenous substrates, including fatty acids, steroid hormones and vitamins. Mechanistically, uses molecular oxygen inserting one oxygen atom into a substrate, and reducing the second into a water molecule, with two electrons provided by NADPH via cytochrome P450 reductase (NADPH--hemoprotein reductase). Exhibits catalytic activity for the formation of hydroxyestrogens from 17beta-estradiol (E2), namely 2- and 4-hydroxy E2. Metabolizes testosterone and progesterone to B or D ring hydroxylated metabolites. May act as a major enzyme for all-trans retinoic acid biosynthesis in extrahepatic tissues. Catalyzes two successive oxidative transformation of all-trans retinol to all-trans retinal and then to the active form all-trans retinoic acid. Catalyzes the epoxidation of double bonds of certain PUFA. Converts arachidonic acid toward epoxyeicosatrienoic acid (EpETrE) regioisomers, 8,9-, 11,12-, and 14,15- EpETrE, that function as lipid mediators in the vascular system. Additionally, displays dehydratase activity toward oxygenated eicosanoids hydroperoxyeicosatetraenoates (HpETEs). This activity is independent of cytochrome P450 reductase, NADPH, and O2. Also involved in the oxidative metabolism of xenobiotics, particularly converting polycyclic aromatic hydrocarbons and heterocyclic aryl amines procarcinogens to DNA-damaging products. Plays an important role in retinal vascular development. Under ambient/hyperoxic O2 conditions, promotes angiogenesis and capillary morphogenesis of retinal endothelial cells and pericytes, likely by metabolizing the oxygenated products symptomatic of oxidative stress. Also, contributes to oxidative homeostasis and ultrastructural organization and function of trabecular meshwork tissue through modulation of POSTN expression. The protein is Cytochrome P450 1B1 of Mus musculus (Mouse).